A 274-amino-acid chain; its full sequence is Shikimate dehydrogenase (NADP(+)) (274 aa).

Residues 15 to 17 (SKS) and Thr62 contribute to the shikimate site. Lys66 (proton acceptor) is an active-site residue. NADP(+) is bound at residue Asp78. Shikimate contacts are provided by Asn87 and Asp102. NADP(+)-binding positions include 127-131 (GAGGA) and Met215. Tyr217 contributes to the shikimate binding site. Residue Gly239 participates in NADP(+) binding.

It belongs to the shikimate dehydrogenase family. As to quaternary structure, homodimer.

The catalysed reaction is shikimate + NADP(+) = 3-dehydroshikimate + NADPH + H(+). Its pathway is metabolic intermediate biosynthesis; chorismate biosynthesis; chorismate from D-erythrose 4-phosphate and phosphoenolpyruvate: step 4/7. In terms of biological role, involved in the biosynthesis of the chorismate, which leads to the biosynthesis of aromatic amino acids. Catalyzes the reversible NADPH linked reduction of 3-dehydroshikimate (DHSA) to yield shikimate (SA). The protein is Shikimate dehydrogenase (NADP(+)) of Dechloromonas aromatica (strain RCB).